A 352-amino-acid polypeptide reads, in one-letter code: S-adenosylmethionine:tRNA ribosyltransferase-isomerase (352 aa).

It belongs to the QueA family. Monomer.

It is found in the cytoplasm. It carries out the reaction 7-aminomethyl-7-carbaguanosine(34) in tRNA + S-adenosyl-L-methionine = epoxyqueuosine(34) in tRNA + adenine + L-methionine + 2 H(+). Its pathway is tRNA modification; tRNA-queuosine biosynthesis. In terms of biological role, transfers and isomerizes the ribose moiety from AdoMet to the 7-aminomethyl group of 7-deazaguanine (preQ1-tRNA) to give epoxyqueuosine (oQ-tRNA). The chain is S-adenosylmethionine:tRNA ribosyltransferase-isomerase from Vibrio cholerae serotype O1 (strain ATCC 39541 / Classical Ogawa 395 / O395).